Consider the following 544-residue polypeptide: MAARIIKFDQEGRNAILKGVNTLADAVKVTLGPKGRNVVIEKAFGSPLITKDGVTVAKEIELEDKFENMGAQLVKEVASKTSDVAGDGTTTATVLAQAIYRQGSKLVAAGHNPMEIKRGIDKAVETIVAELKSISKPIKDHKEIAQVGTISANNDKTIGDIIAQAMEKVGKEGVITVEEAKAMETSLETVEGMQFDRGYLSPYFVTDPERMEASLENAMILIHDKKISNMKDLLPVLEQTAKSGRPLLIIAEDIEGEALATLVVNKLRGVLNICAVKAPGFGDRRKAMLEDIAILTGGQVISEEIGNKLENTTMDMLGRAKRITVDKDNTTIIDGDGKEADIQGRVKQIRAQIEETTSDYDREKLQERLAKLVGGVAVIKVGAATETEMKEKKARVEDALHATRAAVDEGIVPGGGVAYLRALASLDALSLPTEQQFGVNVIKRSLEEPIRQIAQNAGVDGSIVVDKVKNSKDAFGYNAAEDEYVDMLAAGIIDPTKVSRSALQNAASVAGLMLTTEAMIADKPKEEAPMPAMPGGMGGMGGMM.

Residues 30-33, Lys-51, 87-91, Gly-415, 478-480, and Asp-494 each bind ATP; these read TLGP, DGTTT, and NAA.

It belongs to the chaperonin (HSP60) family. As to quaternary structure, forms a cylinder of 14 subunits composed of two heptameric rings stacked back-to-back. Interacts with the co-chaperonin GroES.

It is found in the cytoplasm. It carries out the reaction ATP + H2O + a folded polypeptide = ADP + phosphate + an unfolded polypeptide.. In terms of biological role, together with its co-chaperonin GroES, plays an essential role in assisting protein folding. The GroEL-GroES system forms a nano-cage that allows encapsulation of the non-native substrate proteins and provides a physical environment optimized to promote and accelerate protein folding. This is Chaperonin GroEL from Geobacter sulfurreducens (strain ATCC 51573 / DSM 12127 / PCA).